Consider the following 543-residue polypeptide: Excitatory amino acid transporter 1 (543 aa).

Over M1–R47 the chain is Cytoplasmic. The chain crosses the membrane as a helical span at residues N48–V68. Over R69 to E86 the chain is Extracellular. A helical membrane pass occupies residues L87–M108. Residues A109–R122 are Cytoplasmic-facing. Residues A123 to V145 form a helical membrane-spanning segment. The Extracellular portion of the chain corresponds to H146 to G237. 2 N-linked (GlcNAc...) asparagine glycosylation sites follow: N206 and N217. A helical membrane pass occupies residues A238–M261. Residues K262–D270 are Cytoplasmic-facing. Residues F271–I298 form a helical membrane-spanning segment. Over A299–T319 the chain is Extracellular. The chain crosses the membrane as a helical span at residues V320–V341. Over T342 to P346 the chain is Cytoplasmic. The discontinuously helical intramembrane region spans W347 to L377. Residue S364–S366 coordinates L-aspartate. Residues E378–R386 are Cytoplasmic-facing. Residues V387–F413 form a helical membrane-spanning segment. Positions 395, 397, and 399 each coordinate Na(+). T403 contacts L-aspartate. Residues I414–Q426 are Extracellular-facing. The segment at residues I427–G460 is an intramembrane region (discontinuously helical). An L-aspartate-binding site is contributed by I444 to G448. Residues L461–D473 are Extracellular-facing. The helical transmembrane segment at W474 to V495 threads the bilayer. D477 and N484 together coordinate L-aspartate. N484 and D488 together coordinate Na(+). Topologically, residues E496–M543 are cytoplasmic. The interval K521–M543 is disordered. The span at E532–M543 shows a compositional bias: basic and acidic residues.

Belongs to the dicarboxylate/amino acid:cation symporter (DAACS) (TC 2.A.23) family. As to quaternary structure, homotrimer. As to expression, detected in retina (at protein level).

The protein localises to the cell membrane. The catalysed reaction is K(+)(in) + L-glutamate(out) + 3 Na(+)(out) + H(+)(out) = K(+)(out) + L-glutamate(in) + 3 Na(+)(in) + H(+)(in). It catalyses the reaction K(+)(in) + L-aspartate(out) + 3 Na(+)(out) + H(+)(out) = K(+)(out) + L-aspartate(in) + 3 Na(+)(in) + H(+)(in). It carries out the reaction D-aspartate(out) + K(+)(in) + 3 Na(+)(out) + H(+)(out) = D-aspartate(in) + K(+)(out) + 3 Na(+)(in) + H(+)(in). Its function is as follows. Sodium-dependent, high-affinity amino acid transporter that mediates the uptake of L-glutamate and also L-aspartate and D-aspartate. Functions as a symporter that transports one amino acid molecule together with two or three Na(+) ions and one proton, in parallel with the counter-transport of one K(+) ion. Plays a redundant role in the rapid removal of released glutamate from the synaptic cleft, which is essential for terminating the postsynaptic action of glutamate. In Ambystoma tigrinum (Eastern tiger salamander), this protein is Excitatory amino acid transporter 1 (SLC1A3).